The chain runs to 156 residues: UPF0336 protein SACE_6876 (156 aa).

The 121-residue stretch at 8–128 (IGREYPPTPA…DFLTVRAEIT (121 aa)) folds into the MaoC-like domain.

Belongs to the UPF0336 family.

This Saccharopolyspora erythraea (strain ATCC 11635 / DSM 40517 / JCM 4748 / NBRC 13426 / NCIMB 8594 / NRRL 2338) protein is UPF0336 protein SACE_6876.